The sequence spans 152 residues: B3 domain-containing protein At1g10455 (152 aa).

Positions 24 to 131 form a DNA-binding region, TF-B3; the sequence is LKKKLSDSDL…EVKFKHFKSQ (108 aa).

The protein resides in the nucleus. The polypeptide is B3 domain-containing protein At1g10455 (Arabidopsis thaliana (Mouse-ear cress)).